A 188-amino-acid chain; its full sequence is Protein K (188 aa).

In Escherichia coli, this protein is Protein K (K).